A 406-amino-acid polypeptide reads, in one-letter code: MQYTEIMVRYGELSTKGHNKKSFIDRLGVNVRKALHSFDQVKVHAQRDRLHVELNGADYDQVMNRLKLVFGIQNFSPSIKVDKTFEATAEAAAQMIAEQVDKPITFKVETRRSDHQFAIDTFEMNNKLGGYLLDKFPDKLKVDVHHPDLTLRVEIRLNGIFLSSETIKGAGGLPVGTAGKGMMMMSGGIDSPVAAYLGMKRGVSMEMVHFFSPPYTSPQALAKAKQLTERLAKYSGSIKFIQVPFAEIQETVKEKVPEGYLMTIQRRMMLRLAAALMIKRHGLAIFNGESLGQVASQTMESMLAINDVTSYPVLRPVLSFDKTEIIKIAQDIDTYDLSILPYEDCCTVFTPPSPKTRPNVKRAREYEKRLDIEGLMQRALDGIEITEIHPGEDYLNQNEDVFAELL.

The THUMP domain maps to 60-166; sequence DQVMNRLKLV…LNGIFLSSET (107 aa). ATP is bound by residues 184-185, 209-210, Arg-266, Gly-288, and Gln-297; these read MM and HF.

This sequence belongs to the ThiI family.

The protein resides in the cytoplasm. The catalysed reaction is [ThiI sulfur-carrier protein]-S-sulfanyl-L-cysteine + a uridine in tRNA + 2 reduced [2Fe-2S]-[ferredoxin] + ATP + H(+) = [ThiI sulfur-carrier protein]-L-cysteine + a 4-thiouridine in tRNA + 2 oxidized [2Fe-2S]-[ferredoxin] + AMP + diphosphate. It catalyses the reaction [ThiS sulfur-carrier protein]-C-terminal Gly-Gly-AMP + S-sulfanyl-L-cysteinyl-[cysteine desulfurase] + AH2 = [ThiS sulfur-carrier protein]-C-terminal-Gly-aminoethanethioate + L-cysteinyl-[cysteine desulfurase] + A + AMP + 2 H(+). It functions in the pathway cofactor biosynthesis; thiamine diphosphate biosynthesis. Its function is as follows. Catalyzes the ATP-dependent transfer of a sulfur to tRNA to produce 4-thiouridine in position 8 of tRNAs, which functions as a near-UV photosensor. Also catalyzes the transfer of sulfur to the sulfur carrier protein ThiS, forming ThiS-thiocarboxylate. This is a step in the synthesis of thiazole, in the thiamine biosynthesis pathway. The sulfur is donated as persulfide by IscS. This is Probable tRNA sulfurtransferase from Limosilactobacillus reuteri subsp. reuteri (strain JCM 1112) (Lactobacillus reuteri).